A 571-amino-acid polypeptide reads, in one-letter code: MRWLSAASSAFAVVLWLSGPPFAIGPLVFIALVPLLAIAEVSPSSSWKRPLYAASLAYWLLSLQGLRYAHPLMFLPWIALSGYLAIYPVLFIALLRRLRLVDNCDVSQARRDRVPLCLVAAVVWVGLEWIRNYFFTGISVLMLGHALADMPMLIQIADLGGTYAVSFVIVCVNVAMFDALNRWVVQRTSSVSDSPMKSLVTAGGLLIATMVYGAMSMNAETEPTGKTIALLGDNELTVYEQDIVREQEIFATYGQMAIDAVAKSNTRIDAVVWPESMFSGGLPWMTTGADLVVPDFMQNPAAAPLQPEQLRFAVESKQNDFLDRANSIQRAMRASSTVPTEAPPAIIGGCGLVQYADRPSQYSGVVWVNATGNMSGTYSKNHLVLFGETIPLVHSLPWIRDIVPPGLGLDRGTQPERFDLDGISLMPNLCIETAVERIPVNHMHQLNSRANPKLPDAIVTLTNDVWFHDSAVVDHHLRCAQLVAVGCRRPILSAANGGPTVWIDSAGRVVERLAKGQSDVIYAQPRRDSRISLYVRIGSWPAGLMGAATLCGLAWMTFEWLMRRRKRSVIA.

6 consecutive transmembrane segments (helical) span residues 13–33 (VVLW…IALV), 51–68 (LYAA…GLRY), 72–92 (LMFL…VLFI), 118–138 (LVAA…FTGI), 152–172 (MLIQ…IVCV), and 199–219 (LVTA…SMNA). Residues 234 to 527 (NELTVYEQDI…SDVIYAQPRR (294 aa)) enclose the CN hydrolase domain. E275 serves as the catalytic Proton acceptor. K380 is an active-site residue. Catalysis depends on C430, which acts as the Nucleophile. The helical transmembrane segment at 542–562 (AGLMGAATLCGLAWMTFEWLM) threads the bilayer.

The protein belongs to the CN hydrolase family. Apolipoprotein N-acyltransferase subfamily.

It is found in the cell inner membrane. It catalyses the reaction N-terminal S-1,2-diacyl-sn-glyceryl-L-cysteinyl-[lipoprotein] + a glycerophospholipid = N-acyl-S-1,2-diacyl-sn-glyceryl-L-cysteinyl-[lipoprotein] + a 2-acyl-sn-glycero-3-phospholipid + H(+). Its pathway is protein modification; lipoprotein biosynthesis (N-acyl transfer). In terms of biological role, catalyzes the phospholipid dependent N-acylation of the N-terminal cysteine of apolipoprotein, the last step in lipoprotein maturation. In Rhodopirellula baltica (strain DSM 10527 / NCIMB 13988 / SH1), this protein is Apolipoprotein N-acyltransferase.